The sequence spans 363 residues: 3-isopropylmalate dehydrogenase (363 aa).

An NAD(+)-binding site is contributed by 78–91 (GKKWDYLPIESRPE). The substrate site is built by arginine 99, arginine 109, arginine 138, and aspartate 227. Residues aspartate 227, aspartate 251, and aspartate 255 each contribute to the Mg(2+) site. NAD(+) is bound at residue 285–297 (GSAPDIEGKNIAN).

It belongs to the isocitrate and isopropylmalate dehydrogenases family. LeuB type 1 subfamily. Homodimer. It depends on Mg(2+) as a cofactor. Requires Mn(2+) as cofactor.

It is found in the cytoplasm. It catalyses the reaction (2R,3S)-3-isopropylmalate + NAD(+) = 4-methyl-2-oxopentanoate + CO2 + NADH. The protein operates within amino-acid biosynthesis; L-leucine biosynthesis; L-leucine from 3-methyl-2-oxobutanoate: step 3/4. In terms of biological role, catalyzes the oxidation of 3-carboxy-2-hydroxy-4-methylpentanoate (3-isopropylmalate) to 3-carboxy-4-methyl-2-oxopentanoate. The product decarboxylates to 4-methyl-2 oxopentanoate. The protein is 3-isopropylmalate dehydrogenase of Buchnera aphidicola subsp. Schizaphis graminum (strain Sg).